The chain runs to 202 residues: Neuroligin-3 (202 aa).

Residues 1-202 (RYGSPTYFYA…TGTRMQGHSW (202 aa)) lie on the Extracellular side of the membrane. Residues Cys-15 and Cys-49 are joined by a disulfide bond. A glycan (N-linked (GlcNAc...) asparagine) is linked at Asn-50. A disordered region spans residues 154–202 (LRIPPTAPTSPAGPMARPGAPSGQPSHLPTATRMPRGPGTGTRMQGHSW).

The protein belongs to the type-B carboxylesterase/lipase family. Homodimer, and heterodimer with NLGN1 and NLGN2. Interacts with neurexins NRXN1, NRXN2 and NRXN3. Interaction with neurexins is mediated by heparan sulfate glycan modification on neurexin. Interacts (via its C-terminus) with DLG4/PSD-95 (via PDZ domain 3).

It is found in the cell membrane. The protein localises to the synapse. In terms of biological role, cell surface protein involved in cell-cell-interactions via its interactions with neurexin family members. Plays a role in synapse function and synaptic signal transmission, and probably mediates its effects by recruiting and clustering other synaptic proteins. May promote the initial formation of synapses, but is not essential for this. May also play a role in glia-glia or glia-neuron interactions in the developing peripheral nervous system. In Macaca mulatta (Rhesus macaque), this protein is Neuroligin-3 (NLGN3).